The following is a 321-amino-acid chain: NADH-ubiquinone oxidoreductase chain 1 (321 aa).

The next 8 membrane-spanning stretches (helical) occupy residues 7–27 (ITNS…LTLM), 73–93 (ILLI…WTPI), 104–124 (LGLL…LWAG), 148–168 (VTLG…TMQL), 175–195 (HTWL…STLA), 227–247 (FFLA…ILFI), 256–276 (ELFL…FLWI), and 297–317 (LPLT…ISGI).

It belongs to the complex I subunit 1 family.

Its subcellular location is the mitochondrion inner membrane. The catalysed reaction is a ubiquinone + NADH + 5 H(+)(in) = a ubiquinol + NAD(+) + 4 H(+)(out). Functionally, core subunit of the mitochondrial membrane respiratory chain NADH dehydrogenase (Complex I) that is believed to belong to the minimal assembly required for catalysis. Complex I functions in the transfer of electrons from NADH to the respiratory chain. The immediate electron acceptor for the enzyme is believed to be ubiquinone. This Varanus dumerilii (Dumeril's monitor) protein is NADH-ubiquinone oxidoreductase chain 1 (MT-ND1).